Consider the following 400-residue polypeptide: Acetate kinase (400 aa).

A Mg(2+)-binding site is contributed by Asn10. Lys17 provides a ligand contact to ATP. Arg91 is a binding site for substrate. Asp150 functions as the Proton donor/acceptor in the catalytic mechanism. Residues 210 to 214 (HLGNG), 285 to 287 (DCR), and 333 to 337 (GIGEN) each bind ATP. Position 387 (Glu387) interacts with Mg(2+).

The protein belongs to the acetokinase family. As to quaternary structure, homodimer. It depends on Mg(2+) as a cofactor. Mn(2+) serves as cofactor.

It localises to the cytoplasm. It catalyses the reaction acetate + ATP = acetyl phosphate + ADP. The protein operates within metabolic intermediate biosynthesis; acetyl-CoA biosynthesis; acetyl-CoA from acetate: step 1/2. Catalyzes the formation of acetyl phosphate from acetate and ATP. Can also catalyze the reverse reaction. The sequence is that of Acetate kinase from Pectobacterium carotovorum subsp. carotovorum (strain PC1).